Reading from the N-terminus, the 623-residue chain is Kelch repeat and BTB domain-containing protein 12 (623 aa).

In terms of domain architecture, BTB spans 25–92; sequence TDVVLVAEGV…MYSSNLPLTA (68 aa). The BACK domain maps to 127–236; that stretch reads CLGIYYYARD…GVDYLKGTMK (110 aa). Kelch repeat units lie at residues 390-440, 441-496, 498-551, and 557-607; these read NLYL…RMKG, RLYV…ALNG, IYVL…ASNA, and KLYV…LVAN.

This chain is Kelch repeat and BTB domain-containing protein 12 (kbtbd12), found in Danio rerio (Zebrafish).